A 170-amino-acid chain; its full sequence is Allophycocyanin subunit beta-18 (170 aa).

N74 bears the N4-methylasparagine mark. C84 contributes to the (2R,3E)-phycocyanobilin binding site.

This sequence belongs to the phycobiliprotein family. As to quaternary structure, heterodimer of an alpha and a beta chain. Contains one covalently linked bilin chromophore.

It is found in the plastid. The protein localises to the chloroplast thylakoid membrane. Its function is as follows. Light-harvesting photosynthetic bile pigment-protein from the phycobiliprotein complex. Allophycocyanin has a maximum absorption at approximately 650 nanometers. The sequence is that of Allophycocyanin subunit beta-18 (apcF) from Cyanidium caldarium (Red alga).